Reading from the N-terminus, the 227-residue chain is Orotidine 5'-phosphate decarboxylase (227 aa).

Residues aspartate 8, lysine 30, 57-66 (DLKFHDIPNT), threonine 116, arginine 177, glutamine 186, glycine 206, and arginine 207 each bind substrate. Lysine 59 acts as the Proton donor in catalysis.

It belongs to the OMP decarboxylase family. Type 1 subfamily. Homodimer.

It carries out the reaction orotidine 5'-phosphate + H(+) = UMP + CO2. It participates in pyrimidine metabolism; UMP biosynthesis via de novo pathway; UMP from orotate: step 2/2. Its function is as follows. Catalyzes the decarboxylation of orotidine 5'-monophosphate (OMP) to uridine 5'-monophosphate (UMP). The sequence is that of Orotidine 5'-phosphate decarboxylase from Acinetobacter baumannii (strain AB307-0294).